The sequence spans 239 residues: AA9 family lytic polysaccharide monooxygenase C (239 aa).

H1 is a Cu(2+) binding site. Residues C39 and C190 are joined by a disulfide bond. N75 carries an N-linked (GlcNAc...) asparagine glycan. H84 serves as a coordination point for Cu(2+). The N-linked (GlcNAc...) asparagine glycan is linked to N135. Residues H157 and Q166 each coordinate O2. Y168 is a binding site for Cu(2+). N194 and N229 each carry an N-linked (GlcNAc...) asparagine glycan.

This sequence belongs to the polysaccharide monooxygenase AA9 family. The cofactor is Cu(2+).

Its subcellular location is the secreted. The enzyme catalyses [(1-&gt;4)-beta-D-glucosyl]n+m + reduced acceptor + O2 = 4-dehydro-beta-D-glucosyl-[(1-&gt;4)-beta-D-glucosyl]n-1 + [(1-&gt;4)-beta-D-glucosyl]m + acceptor + H2O.. Functionally, lytic polysaccharide monooxygenase (LPMO) that depolymerizes crystalline and amorphous polysaccharides via the oxidation of scissile alpha- or beta-(1-4)-glycosidic bonds, yielding C1 or C4 oxidation products. Catalysis by LPMOs requires the reduction of the active-site copper from Cu(II) to Cu(I) by a reducing agent and H(2)O(2) or O(2) as a cosubstrate. The protein is AA9 family lytic polysaccharide monooxygenase C of Gloeophyllum trabeum (Brown rot fungus).